The primary structure comprises 413 residues: Eukaryotic initiation factor 4A-8 (413 aa).

The Q motif motif lies at 40–68; it reads DSFDAMGLQENLLRGIYAYGFEKPSAIQQ. In terms of domain architecture, Helicase ATP-binding spans 71–241; the sequence is IVPFCKGLDV…RKFMNKPVRI (171 aa). Position 84 to 91 (84 to 91) interacts with ATP; it reads AQSGTGKT. Residues 189-192 carry the DEAD box motif; the sequence is DEAD. A Helicase C-terminal domain is found at 252 to 413; it reads GIKQFYVNVD…ELPSNVADLL (162 aa).

It belongs to the DEAD box helicase family. eIF4A subfamily. EIF4F is a multi-subunit complex, the composition of which varies with external and internal environmental conditions. It is composed of at least EIF4A, EIF4E and EIF4G. As to expression, pollen specific.

It catalyses the reaction ATP + H2O = ADP + phosphate + H(+). Functionally, ATP-dependent RNA helicase which is a subunit of the eIF4F complex involved in cap recognition and is required for mRNA binding to ribosome. In the current model of translation initiation, eIF4A unwinds RNA secondary structures in the 5'-UTR of mRNAs which is necessary to allow efficient binding of the small ribosomal subunit, and subsequent scanning for the initiator codon. This chain is Eukaryotic initiation factor 4A-8, found in Nicotiana tabacum (Common tobacco).